Consider the following 366-residue polypeptide: Flagellar P-ring protein (366 aa).

A signal peptide spans 1-27 (MKSKYSIFCMFLLRGFIFLGTVFSLNS).

It belongs to the FlgI family. In terms of assembly, the basal body constitutes a major portion of the flagellar organelle and consists of four rings (L,P,S, and M) mounted on a central rod.

The protein resides in the periplasm. It localises to the bacterial flagellum basal body. In terms of biological role, assembles around the rod to form the L-ring and probably protects the motor/basal body from shearing forces during rotation. This Leptospira interrogans serogroup Icterohaemorrhagiae serovar copenhageni (strain Fiocruz L1-130) protein is Flagellar P-ring protein.